We begin with the raw amino-acid sequence, 1281 residues long: Protein ETHYLENE-INSENSITIVE 2 (1281 aa).

Topologically, residues 1–21 (MDGQQLRSSESPASGGGGVTG) are cytoplasmic. A helical membrane pass occupies residues 22–42 (GGAPHLFHALGPALLISIGYI). At 43–61 (DLGKWVAAVEAGSRFGLDL) the chain is on the extracellular side. Residues 62–82 (VLLALLFNFMAILCQYLAACI) traverse the membrane as a helical segment. Residues 83 to 112 (GTVTGRSLAEICHQEYSRPTCIFLGVQAGL) are Cytoplasmic-facing. The chain crosses the membrane as a helical span at residues 113–133 (SLLTSELTMIFGIALGFNLLF). The Extracellular portion of the chain corresponds to 134–137 (EYDD). The helical transmembrane segment at 138-158 (LITGICFATVVPNLLPYAISH) threads the bilayer. The Cytoplasmic portion of the chain corresponds to 159–163 (LGKKM). Residues 164–184 (VGTLNACIAGFALLCYVLGLL) traverse the membrane as a helical segment. At 185–208 (VSQPQIPLTTNVIFPKLSGESAYS) the chain is on the extracellular side. The helical transmembrane segment at 209-229 (LMALLGANVMAHNFYIHSSVV) threads the bilayer. Topologically, residues 230-238 (QGQKRSAFA) are cytoplasmic. Residues 239–259 (VGALFHDHLFSVLFIFTGIFL) traverse the membrane as a helical segment. Topologically, residues 260–297 (VNHVLMNSAAADSTNTLLLTFQDVVELMNQIFVNPMAP) are extracellular. A helical transmembrane segment spans residues 298–318 (TIFLVVLLFSSHIISLTSAIG). At 319–325 (SQVISQH) the chain is on the cytoplasmic side. A helical membrane pass occupies residues 326–346 (LFGINLPLSGHHLILKAFAIV). Topologically, residues 347–362 (PALYCAKVAGAEGIYQ) are extracellular. The helical transmembrane segment at 363–383 (LLIICQIIQAMLLPSSVVPLF) threads the bilayer. Over 384-400 (RVASSRLIMGAHRVSLH) the chain is Cytoplasmic. Residues 401–421 (LEILTFLAFLLMLFSNIIFMA) traverse the membrane as a helical segment. The Extracellular portion of the chain corresponds to 422–447 (EMLFGDSGWLNTLKGNTGSPVVFPST). The helical transmembrane segment at 448–468 (VLITVACVSVAFSLYMAVTPL) threads the bilayer. Topologically, residues 469–1281 (KSGSHEAELQ…KRRLSSKGQQ (813 aa)) are cytoplasmic. Disordered regions lie at residues 540-565 (IESD…SPSF) and 593-665 (ESTV…NGSG). The segment covering 548–557 (HSTAHTSTAP) has biased composition (polar residues). The segment covering 599–610 (VDSKSTGERDIE) has biased composition (basic and acidic residues).

This sequence belongs to the NRAMP (TC 2.A.55) family. In terms of tissue distribution, expressed in roots, leaf sheaths, leaf blades, flowers, developing seeds, germinating seeds and young seedlings. Expressed in adventitious roots, vascular tissues of the seminal roots, lateral roots, the connecting region between vascular tissues and lateral roots, mature leaf, mature stem, tips of adventitious roots derived from the node, shoot apex, young panicle, anthers, pistil, stigma, ovary, seed coat and fruit coat pericarp.

Its subcellular location is the membrane. In terms of biological role, central factor in ethylene signaling pathways that control development, senescence and grain size. Acts as a positive component of the ethylene-signaling pathway. This chain is Protein ETHYLENE-INSENSITIVE 2, found in Oryza sativa subsp. japonica (Rice).